Reading from the N-terminus, the 487-residue chain is Betaine aldehyde dehydrogenase (487 aa).

K(+) is bound by residues Ile-27 and Asp-93. An NAD(+)-binding site is contributed by 149–151 (GAW). Lys-161 serves as the catalytic Charge relay system. Residues 175–178 (KPSE) and 228–231 (SVPT) each bind NAD(+). The active-site Proton acceptor is the Glu-249. NAD(+) is bound by residues Gly-251, Cys-283, and Glu-384. Cys-283 (nucleophile) is an active-site residue. Residue Cys-283 is modified to Cysteine sulfenic acid (-SOH). Lys-454 and Gly-457 together coordinate K(+). Glu-461 functions as the Charge relay system in the catalytic mechanism.

The protein belongs to the aldehyde dehydrogenase family. Dimer of dimers. Requires K(+) as cofactor.

The catalysed reaction is betaine aldehyde + NAD(+) + H2O = glycine betaine + NADH + 2 H(+). It functions in the pathway amine and polyamine biosynthesis; betaine biosynthesis via choline pathway; betaine from betaine aldehyde: step 1/1. Involved in the biosynthesis of the osmoprotectant glycine betaine. Catalyzes the irreversible oxidation of betaine aldehyde to the corresponding acid. The polypeptide is Betaine aldehyde dehydrogenase (Mesorhizobium japonicum (strain LMG 29417 / CECT 9101 / MAFF 303099) (Mesorhizobium loti (strain MAFF 303099))).